A 64-amino-acid chain; its full sequence is Large ribosomal subunit protein uL30 (64 aa).

This sequence belongs to the universal ribosomal protein uL30 family. In terms of assembly, part of the 50S ribosomal subunit.

The sequence is that of Large ribosomal subunit protein uL30 from Bdellovibrio bacteriovorus (strain ATCC 15356 / DSM 50701 / NCIMB 9529 / HD100).